The sequence spans 108 residues: MPKPGILKSKSMFCVIYRSSKRDQTYLYVEKKDDFSRVPEELMKGFGQPQLAMILPLDGRKKLVNADIEKVKQALTEQGYYLQLPPPPEDLLKQHLSVMGQKTHDTNK.

The region spanning 12–96 (MFCVIYRSSK…PPEDLLKQHL (85 aa)) is the YcgL domain.

The sequence is that of Protein YcgL from Escherichia coli O17:K52:H18 (strain UMN026 / ExPEC).